The sequence spans 141 residues: MRNDHVTLRSTAVFDLLAPQTPAVPVQVELRYDTRDPYAVVAAFRTGRAGWVEWVFARDLLADGLIAHAGVGDVTIRPAVDDPEVVVIELSSPSGHAVFEASAQELADFLDRTYDVVVPGNENLWVNVDDALTRLLPHDLS.

Belongs to the SsgA family. In terms of assembly, interacts with SsgA. Interacts with FtsZ (via N-terminus).

The protein resides in the cell septum. Functionally, involved in sporulation-specific cell division. Required for early stages of sporulation. Important in the process of growth cessation prior to sporulation-specific cell division. Recruits cell division protein FtsZ to the future septum sites and tethers the contractile ring structure (Z ring) to the cytoplasmic membrane during sporulation. Stimulates polymerization and filament length of FtsZ in vitro. This Saccharopolyspora erythraea (strain ATCC 11635 / DSM 40517 / JCM 4748 / NBRC 13426 / NCIMB 8594 / NRRL 2338) protein is Sporulation-specific cell division protein SsgB.